Reading from the N-terminus, the 329-residue chain is Cytosolic Fe-S cluster assembly factor NBP35 (329 aa).

A disordered region spans residues 1–33 (MAPSQVEDISKTELETPEHCPGPESEQAGKEDA). The segment covering 8–18 (DISKTELETPE) has biased composition (basic and acidic residues). Residues cysteine 20, cysteine 34, cysteine 37, and cysteine 43 each contribute to the [4Fe-4S] cluster site. 74-81 (GKGGVGKS) contributes to the ATP binding site. [4Fe-4S] cluster-binding residues include cysteine 248 and cysteine 251.

Belongs to the Mrp/NBP35 ATP-binding proteins family. NUBP1/NBP35 subfamily. As to quaternary structure, heterotetramer of 2 NBP35 and 2 CFD1 chains. [4Fe-4S] cluster is required as a cofactor.

It is found in the cytoplasm. The protein localises to the nucleus. Functionally, component of the cytosolic iron-sulfur (Fe/S) protein assembly (CIA) machinery. Required for maturation of extramitochondrial Fe-S proteins. The NBP35-CFD1 heterotetramer forms a Fe-S scaffold complex, mediating the de novo assembly of an Fe-S cluster and its transfer to target apoproteins. Required for biogenesis and export of both ribosomal subunits, which may reflect a role in assembly of the Fe/S clusters in RLI1, a protein which performs rRNA processing and ribosome export. The protein is Cytosolic Fe-S cluster assembly factor NBP35 of Debaryomyces hansenii (strain ATCC 36239 / CBS 767 / BCRC 21394 / JCM 1990 / NBRC 0083 / IGC 2968) (Yeast).